Reading from the N-terminus, the 255-residue chain is Zinc-finger homeodomain protein 6 (255 aa).

A disordered region spans residues Met1–Gly35. Over residues Pro21 to Gly35 the composition is skewed to low complexity. The ZF-HD dimerization-type; degenerate zinc finger occupies Tyr45–Asp93. Positions Pro106 to Pro126 are enriched in pro residues. Disordered regions lie at residues Pro106–Pro181 and Asn226–Gln255. Over residues Tyr139–Ser153 the composition is skewed to low complexity. The homeobox DNA-binding region spans Arg172 to Ser235. Positions Arg240–Gln255 are enriched in low complexity.

In terms of assembly, homo- and heterodimer with other ZFHD proteins.

It is found in the nucleus. Functionally, putative transcription factor. This Oryza sativa subsp. japonica (Rice) protein is Zinc-finger homeodomain protein 6 (ZHD6).